The sequence spans 153 residues: MTTMAKKSLQLGRAVEWPHTPEEAQLDRVPNPQKGTDYLVRFTVPEFTSLCPVTGQPDFAHLMIDYAPGPWLLESKSLKLYIASFRNHGAFHEDCTVMIGKRIASEIKPKWLRIGGYWYPRGGIPIDVFWQTGRVPKGLWVPEQGVAPYRGRG.

The Thioimide intermediate role is filled by C51. D58 serves as the catalytic Proton donor. Substrate-binding positions include 73-75 and 92-93; these read LES and HE.

This sequence belongs to the GTP cyclohydrolase I family. QueF type 1 subfamily.

The protein localises to the cytoplasm. The catalysed reaction is 7-aminomethyl-7-carbaguanine + 2 NADP(+) = 7-cyano-7-deazaguanine + 2 NADPH + 3 H(+). It functions in the pathway tRNA modification; tRNA-queuosine biosynthesis. Catalyzes the NADPH-dependent reduction of 7-cyano-7-deazaguanine (preQ0) to 7-aminomethyl-7-deazaguanine (preQ1). The sequence is that of NADPH-dependent 7-cyano-7-deazaguanine reductase from Bradyrhizobium diazoefficiens (strain JCM 10833 / BCRC 13528 / IAM 13628 / NBRC 14792 / USDA 110).